A 249-amino-acid polypeptide reads, in one-letter code: Receptor-transporting protein 4 (249 aa).

Topologically, residues 1–227 (MLFPDDFSTW…QGCREPPQRE (227 aa)) are cytoplasmic. A 3CxxC-type zinc finger spans residues 50 to 162 (TVLGRFQCSR…DTRNCEACSL (113 aa)). The segment at 173 to 208 (KVKPPRSPSPLPKSSSPSKSCPPPPQTRNTDFGNKT) is disordered. Residues 199–208 (TRNTDFGNKT) show a composition bias toward polar residues. A helical membrane pass occupies residues 228–248 (IEPPLFLFLSIAAFALFSLFT).

Belongs to the TMEM7 family. Interacts with TASR16. Interacts with OPRD1 and OPRM1; the interaction promotes cell surface localization of the OPDR1-OPRM1 heterodimer. Expressed at low levels in olfactory neurons. Upon viral infection, highly expressed in brain and different cells of nervous tissue.

It is found in the membrane. The protein resides in the cytoplasm. In terms of biological role, chaperone protein that facilitates the trafficking and functional cell surface expression of some G-protein coupled receptors (GPCRs). Promotes functional expression of the bitter taste receptor TAS2R16. Also promotes functional expression of the opioid receptor heterodimer OPRD1-OPRM1. In addition, acts as a potent IFN-inducible suppressor of pathogens including lyssavirus rabies, influenza A or yellow fever virus. Mechanistically, associates with the viral replicase, binds viral RNA, and thereby suppresses viral genome amplification that replicates at the endoplasmic reticulum. In addition, restores antiviral signaling by interacting with and sequestering influenza virus protein NS1. In Mus musculus (Mouse), this protein is Receptor-transporting protein 4 (Rtp4).